The primary structure comprises 274 residues: uncharacterized protein (274 aa).

Over residues M1–H20 the composition is skewed to basic and acidic residues. 3 disordered regions span residues M1 to D63, N148 to D217, and A230 to V274. Residues K21–R44 are compositionally biased toward basic residues. Over residues A45 to D63 the composition is skewed to basic and acidic residues. Residues F85–P161 enclose the RRM domain. Residues N148–S160 show a composition bias toward polar residues. Low complexity-rich tracts occupy residues S181–R190 and R200–I211. Residues A230–I245 are compositionally biased toward polar residues. The span at L263–V274 shows a compositional bias: acidic residues.

This is an uncharacterized protein from Schizosaccharomyces pombe (strain 972 / ATCC 24843) (Fission yeast).